Consider the following 147-residue polypeptide: UPF0306 protein YhbP (147 aa).

It belongs to the UPF0306 family.

The polypeptide is UPF0306 protein YhbP (Escherichia coli O157:H7).